Consider the following 264-residue polypeptide: ECF RNA polymerase sigma factor BldN (264 aa).

Positions 1-87 (MYPHVGVDAS…PAADSDSARM (87 aa)) are not required for transcription in vitro. The interval 64–83 (RSSSSGAAATTHRRPAADSD) is disordered. The tract at residues 105-172 (LYDQYSDTVY…LVADHFKSSR (68 aa)) is sigma-70 factor domain-2. The Polymerase core binding motif lies at 129–132 (DLTS). The segment at 204–255 (ALLDAVRRLNPQQQECVTLRFLQGLSVAETARVMGKNEGAIKTLQYRAVRTL) is sigma-70 factor domain-4.

Belongs to the sigma-70 factor family. ECF subfamily. In terms of processing, two forms of protein exist; a 35 kDa form in early growth and a 28 kDa form seen in later stages (at protein level). In liquid culture the larger form accumulates to higher level than on solid media. The shorter form results from processing just upstream of Met-87; the exact position is unknown. There are 4 possible start codons; mutation of the first prevents protein production while mutation of the other 3 (Val-44, Met-87 and Met-88) permits production of both forms. Introduction of stop codons between the first and second, or second and third possible start codons also prevents protein production, corroborating that the annotated start codon is the correct one.

Sigma factors are initiation factors that promote the attachment of RNA polymerase to specific initiation sites and are then released. Extracytoplasmic function (ECF) sigma factors are usually held in an inactive form by an anti-sigma factor until released. ECF sigma factor involved in aerial mycelium formation, required for translation from the bldMp1 promoter. Expressed as a preprotein; processing and accumulation of the mature protein starts as aerial mycelium formation and sporulation commence. Activates expression of about 17 genes, including those for rdlA and most of the chaplins (chpA to chpH); chaplin activation is indirect. The sequence is that of ECF RNA polymerase sigma factor BldN from Streptomyces coelicolor (strain ATCC BAA-471 / A3(2) / M145).